Here is a 469-residue protein sequence, read N- to C-terminus: Citrate synthase, mitochondrial (469 aa).

The N-terminal 30 residues, 1 to 30 (MSFLTVSRLAPKLLNSKNATYFLVAARNAS), are a transit peptide targeting the mitochondrion. Catalysis depends on residues His-304 and His-350. Arg-359 is a binding site for oxaloacetate. Asp-405 is a catalytic residue. Arg-431 and Arg-451 together coordinate oxaloacetate.

It belongs to the citrate synthase family. As to quaternary structure, homodimer.

The protein localises to the mitochondrion matrix. The catalysed reaction is oxaloacetate + acetyl-CoA + H2O = citrate + CoA + H(+). It participates in carbohydrate metabolism; tricarboxylic acid cycle; isocitrate from oxaloacetate: step 1/2. Functionally, key enzyme of the Krebs tricarboxylic acid cycle which catalyzes the synthesis of citrate from acetyl coenzyme A and oxaloacetate. The polypeptide is Citrate synthase, mitochondrial (cs) (Kajikia audax (Striped marlin)).